Here is a 403-residue protein sequence, read N- to C-terminus: 1-deoxy-D-xylulose 5-phosphate reductoisomerase (403 aa).

Positions 18, 19, 20, 21, 46, and 132 each coordinate NADPH. Lysine 133 serves as a coordination point for 1-deoxy-D-xylulose 5-phosphate. An NADPH-binding site is contributed by glutamate 134. Residue aspartate 158 coordinates Mn(2+). Residues serine 159, glutamate 160, serine 189, and histidine 212 each coordinate 1-deoxy-D-xylulose 5-phosphate. Residue glutamate 160 coordinates Mn(2+). Glycine 218 is an NADPH binding site. 1-deoxy-D-xylulose 5-phosphate contacts are provided by serine 225, asparagine 230, lysine 231, and glutamate 234. Glutamate 234 is a Mn(2+) binding site.

This sequence belongs to the DXR family. Requires Mg(2+) as cofactor. The cofactor is Mn(2+).

The catalysed reaction is 2-C-methyl-D-erythritol 4-phosphate + NADP(+) = 1-deoxy-D-xylulose 5-phosphate + NADPH + H(+). The protein operates within isoprenoid biosynthesis; isopentenyl diphosphate biosynthesis via DXP pathway; isopentenyl diphosphate from 1-deoxy-D-xylulose 5-phosphate: step 1/6. Catalyzes the NADPH-dependent rearrangement and reduction of 1-deoxy-D-xylulose-5-phosphate (DXP) to 2-C-methyl-D-erythritol 4-phosphate (MEP). The chain is 1-deoxy-D-xylulose 5-phosphate reductoisomerase from Aromatoleum aromaticum (strain DSM 19018 / LMG 30748 / EbN1) (Azoarcus sp. (strain EbN1)).